Reading from the N-terminus, the 494-residue chain is Aspartyl/glutamyl-tRNA(Asn/Gln) amidotransferase subunit B (494 aa).

This sequence belongs to the GatB/GatE family. GatB subfamily. In terms of assembly, heterotrimer of A, B and C subunits.

The enzyme catalyses L-glutamyl-tRNA(Gln) + L-glutamine + ATP + H2O = L-glutaminyl-tRNA(Gln) + L-glutamate + ADP + phosphate + H(+). It carries out the reaction L-aspartyl-tRNA(Asn) + L-glutamine + ATP + H2O = L-asparaginyl-tRNA(Asn) + L-glutamate + ADP + phosphate + 2 H(+). Functionally, allows the formation of correctly charged Asn-tRNA(Asn) or Gln-tRNA(Gln) through the transamidation of misacylated Asp-tRNA(Asn) or Glu-tRNA(Gln) in organisms which lack either or both of asparaginyl-tRNA or glutaminyl-tRNA synthetases. The reaction takes place in the presence of glutamine and ATP through an activated phospho-Asp-tRNA(Asn) or phospho-Glu-tRNA(Gln). This Synechococcus sp. (strain WH7803) protein is Aspartyl/glutamyl-tRNA(Asn/Gln) amidotransferase subunit B.